The sequence spans 500 residues: UDP-N-acetylmuramoyl-L-alanyl-D-glutamate--2,6-diaminopimelate ligase (500 aa).

Ser-38 is a binding site for UDP-N-acetyl-alpha-D-muramoyl-L-alanyl-D-glutamate. Residue 118–124 coordinates ATP; that stretch reads GTNGKTS. UDP-N-acetyl-alpha-D-muramoyl-L-alanyl-D-glutamate is bound by residues 160-161, Ser-187, and Arg-195; that span reads TT. Lys-227 carries the post-translational modification N6-carboxylysine. Meso-2,6-diaminopimelate-binding positions include Arg-395, 419–422, Gly-471, and Glu-475; that span reads DNPR. Positions 419 to 422 match the Meso-diaminopimelate recognition motif motif; sequence DNPR.

It belongs to the MurCDEF family. MurE subfamily. Requires Mg(2+) as cofactor. Post-translationally, carboxylation is probably crucial for Mg(2+) binding and, consequently, for the gamma-phosphate positioning of ATP.

The protein resides in the cytoplasm. It catalyses the reaction UDP-N-acetyl-alpha-D-muramoyl-L-alanyl-D-glutamate + meso-2,6-diaminopimelate + ATP = UDP-N-acetyl-alpha-D-muramoyl-L-alanyl-gamma-D-glutamyl-meso-2,6-diaminopimelate + ADP + phosphate + H(+). Its pathway is cell wall biogenesis; peptidoglycan biosynthesis. Catalyzes the addition of meso-diaminopimelic acid to the nucleotide precursor UDP-N-acetylmuramoyl-L-alanyl-D-glutamate (UMAG) in the biosynthesis of bacterial cell-wall peptidoglycan. The chain is UDP-N-acetylmuramoyl-L-alanyl-D-glutamate--2,6-diaminopimelate ligase from Leptospira borgpetersenii serovar Hardjo-bovis (strain L550).